The chain runs to 376 residues: Aminomethyltransferase (376 aa).

Belongs to the GcvT family. As to quaternary structure, the glycine cleavage system is composed of four proteins: P, T, L and H.

The catalysed reaction is N(6)-[(R)-S(8)-aminomethyldihydrolipoyl]-L-lysyl-[protein] + (6S)-5,6,7,8-tetrahydrofolate = N(6)-[(R)-dihydrolipoyl]-L-lysyl-[protein] + (6R)-5,10-methylene-5,6,7,8-tetrahydrofolate + NH4(+). The glycine cleavage system catalyzes the degradation of glycine. The sequence is that of Aminomethyltransferase from Nostoc sp. (strain PCC 7120 / SAG 25.82 / UTEX 2576).